A 244-amino-acid chain; its full sequence is 3-oxoacyl-[acyl-carrier-protein] reductase FabG (244 aa).

NADP(+) contacts are provided by residues 12 to 15 (GASR), T37, 59 to 60 (NV), and N86. S138 contributes to the substrate binding site. The active-site Proton acceptor is Y151. Residues 151–155 (YAAAK) and I184 each bind NADP(+).

This sequence belongs to the short-chain dehydrogenases/reductases (SDR) family. Homotetramer.

It carries out the reaction a (3R)-hydroxyacyl-[ACP] + NADP(+) = a 3-oxoacyl-[ACP] + NADPH + H(+). Its pathway is lipid metabolism; fatty acid biosynthesis. Catalyzes the NADPH-dependent reduction of beta-ketoacyl-ACP substrates to beta-hydroxyacyl-ACP products, the first reductive step in the elongation cycle of fatty acid biosynthesis. In Vibrio cholerae serotype O1 (strain ATCC 39315 / El Tor Inaba N16961), this protein is 3-oxoacyl-[acyl-carrier-protein] reductase FabG (fabG).